A 214-amino-acid chain; its full sequence is Putative F-box protein At5g15670 (214 aa).

Residues 22-68 enclose the F-box domain; the sequence is RNKFDEIPHDLVIEILGRLPAKSVARFLTVSKLWATSIRSLDFIKSY.

This chain is Putative F-box protein At5g15670, found in Arabidopsis thaliana (Mouse-ear cress).